Here is a 336-residue protein sequence, read N- to C-terminus: Aspartate--ammonia ligase (336 aa).

It belongs to the class-II aminoacyl-tRNA synthetase family. AsnA subfamily.

The protein localises to the cytoplasm. The enzyme catalyses L-aspartate + NH4(+) + ATP = L-asparagine + AMP + diphosphate + H(+). It functions in the pathway amino-acid biosynthesis; L-asparagine biosynthesis; L-asparagine from L-aspartate (ammonia route): step 1/1. In Ruminiclostridium cellulolyticum (strain ATCC 35319 / DSM 5812 / JCM 6584 / H10) (Clostridium cellulolyticum), this protein is Aspartate--ammonia ligase.